We begin with the raw amino-acid sequence, 450 residues long: UDP-N-acetylmuramoylalanine--D-glutamate ligase (450 aa).

119–125 (GSNGKTT) contributes to the ATP binding site.

The protein belongs to the MurCDEF family.

The protein localises to the cytoplasm. The enzyme catalyses UDP-N-acetyl-alpha-D-muramoyl-L-alanine + D-glutamate + ATP = UDP-N-acetyl-alpha-D-muramoyl-L-alanyl-D-glutamate + ADP + phosphate + H(+). The protein operates within cell wall biogenesis; peptidoglycan biosynthesis. Cell wall formation. Catalyzes the addition of glutamate to the nucleotide precursor UDP-N-acetylmuramoyl-L-alanine (UMA). This Bacillus cereus (strain AH187) protein is UDP-N-acetylmuramoylalanine--D-glutamate ligase.